A 292-amino-acid chain; its full sequence is MNKKFKCIGIVGHPRHPEALATHEMLYHWLKSKGYSVIIDRQVAKDIGLKDAQTGGLTEIGKQADLAVVVGGDGNMLGAARVLSRYDIKVIGINRGNLGFLTDLDPDNALQQLSEVLDGEYRNEHRFLLEAQVRRNGQKPRISTAINEVVLHPGKVAHMIEFEVYIDERFAFSQRSDGLIIATPTGSTAYSLSAGGPILTPNLDAIVLVPMFPHTLSSRPLVISSESSIRLKFSQNSNDYEVSCDSQIVLPIQDGEDVIISRSKQKLNLIHPQDYNYFNTLSTKLSWSKKMF.

The Proton acceptor role is filled by Asp-73. NAD(+)-binding positions include 73-74, 147-148, His-158, Arg-175, Asp-177, 188-193, and Gln-247; these read DG, NE, and TAYSLS.

This sequence belongs to the NAD kinase family. A divalent metal cation is required as a cofactor.

The protein resides in the cytoplasm. It catalyses the reaction NAD(+) + ATP = ADP + NADP(+) + H(+). Functionally, involved in the regulation of the intracellular balance of NAD and NADP, and is a key enzyme in the biosynthesis of NADP. Catalyzes specifically the phosphorylation on 2'-hydroxyl of the adenosine moiety of NAD to yield NADP. In Photorhabdus laumondii subsp. laumondii (strain DSM 15139 / CIP 105565 / TT01) (Photorhabdus luminescens subsp. laumondii), this protein is NAD kinase.